The following is a 122-amino-acid chain: Large ribosomal subunit protein eL22B (122 aa).

Belongs to the eukaryotic ribosomal protein eL22 family. Component of the large ribosomal subunit (LSU). Mature yeast ribosomes consist of a small (40S) and a large (60S) subunit. The 40S small subunit contains 1 molecule of ribosomal RNA (18S rRNA) and 33 different proteins (encoded by 57 genes). The large 60S subunit contains 3 rRNA molecules (25S, 5.8S and 5S rRNA) and 46 different proteins (encoded by 81 genes).

It is found in the cytoplasm. Its function is as follows. Component of the ribosome, a large ribonucleoprotein complex responsible for the synthesis of proteins in the cell. The small ribosomal subunit (SSU) binds messenger RNAs (mRNAs) and translates the encoded message by selecting cognate aminoacyl-transfer RNA (tRNA) molecules. The large subunit (LSU) contains the ribosomal catalytic site termed the peptidyl transferase center (PTC), which catalyzes the formation of peptide bonds, thereby polymerizing the amino acids delivered by tRNAs into a polypeptide chain. The nascent polypeptides leave the ribosome through a tunnel in the LSU and interact with protein factors that function in enzymatic processing, targeting, and the membrane insertion of nascent chains at the exit of the ribosomal tunnel. The chain is Large ribosomal subunit protein eL22B from Saccharomyces cerevisiae (strain ATCC 204508 / S288c) (Baker's yeast).